Consider the following 501-residue polypeptide: Sugar phosphate exchanger 3 (501 aa).

The helical transmembrane segment at 20 to 40 threads the bilayer; that stretch reads CTHHHIVVFLLTFFSYSLLHA. An N-linked (GlcNAc...) asparagine glycan is attached at Asn-62. The next 5 membrane-spanning stretches (helical) occupy residues 87-107, 119-139, 153-173, 183-203, and 214-234; these read TLFLGTLDTIFLFSYAVGLFV, WVLSFGMCSSALVVFFFGTLT, LWVVNGLLQSTGWPCVVAVMG, FVFGLWSACASVGNILGAFLA, and AFLVTASVQFAGGVIVFCGLL. N-linked (GlcNAc...) asparagine glycosylation occurs at Asn-273. 6 helical membrane-spanning segments follow: residues 298 to 320, 340 to 360, 364 to 384, 393 to 413, 435 to 455, and 459 to 479; these read GVVLYSLAYACLKLVNYSFFFWL, IWYDVGGIIGGTIQGLISDVL, APVLAISLLFAVGSLFGYSRS, VIMAITGFFIGGPSNMISSAI, GIVDGTGSIGAAVGQYLVSLI, and LGWMWVFYFFILMASSTILFI.

This sequence belongs to the major facilitator superfamily. Organophosphate:Pi antiporter (OPA) (TC 2.A.1.4) family.

It is found in the endoplasmic reticulum membrane. It localises to the lysosome membrane. In terms of biological role, unlike the other SLC37 members, seems to lack glucose-6-phosphate antiporter activity. This chain is Sugar phosphate exchanger 3 (SLC37A3), found in Gallus gallus (Chicken).